The following is a 778-amino-acid chain: Beta-phellandrene synthase (neryl-diphosphate-cyclizing), chloroplastic (778 aa).

A chloroplast-targeting transit peptide spans 1-36 (MIVGYRSTIITLSHPKLGNGKTISSNAIFQRSCRVR). Residues aspartate 531, asparagine 676, and glutamate 684 each coordinate Mg(2+). Positions 531 to 535 (DDHFE) match the DDXXD motif motif.

Belongs to the terpene synthase family. Tpse subfamily. Requires Mg(2+) as cofactor. As to expression, trichomes.

Its subcellular location is the plastid. The protein resides in the chloroplast. It carries out the reaction neryl diphosphate = beta-phellandrene + diphosphate. Its function is as follows. Monoterpene synthase catalyzing the production of beta-phellandrene from neryl diphosphate. Also produces lower amounts of delta-2-carene, alpha-phellandrene and limonene. When incubated in vitro with geranyl diphosphate, catalyzes the formation of acyclic myrcene and ocimene as major products in addition to beta-phellandrene. The sequence is that of Beta-phellandrene synthase (neryl-diphosphate-cyclizing), chloroplastic (PHS1) from Solanum lycopersicum (Tomato).